A 1544-amino-acid chain; its full sequence is Protein mahjong (1544 aa).

The interval 1-110 (MSEGSGSENA…AAADRRQATK (110 aa)) is disordered. The span at 10–35 (AAAAEAAAEAEAATEAALMAEAVAVA) shows a compositional bias: low complexity. Residues 38 to 91 (SDEEEQPEAEDMPEQAGDNQEEDAAEQQDGGEPEADEDADADDAMSVENAENES) show a composition bias toward acidic residues. Phosphoserine is present on residues S565 and S569. Residues 912-944 (NKQQLYQLIFEHLESNGLSQTAQMLQREVGLPL) enclose the LisH domain. Disordered stretches follow at residues 946-973 (TPTT…SRNR) and 987-1059 (GNGD…LAED). S955 carries the post-translational modification Phosphoserine. The span at 961 to 971 (SLPSGSSSLSR) shows a compositional bias: low complexity. A compositionally biased stretch (polar residues) spans 1016–1027 (PNFSSLNTTQTP). 2 consecutive short sequence motifs (DWD box) follow at residues 1302–1309 (VLWDVRSG) and 1338–1345 (EVWDLRTF). 2 disordered regions span residues 1447–1475 (KSER…ENTF) and 1487–1544 (LRNL…SSDD). Acidic residues-rich tracts occupy residues 1451-1467 (SEEE…EDGS) and 1495-1535 (NDDE…DVLE).

It belongs to the VPRBP/DCAF1 family. Component of the CUL4-RBX1-DDB1-DCAF1 E3 ubiquitin-protein ligase complex. Interacts with l(2)gl.

The protein resides in the nucleus. The protein operates within protein modification; protein ubiquitination. Probable substrate recognition component of tsome E3 ubiquitin-protein ligase complex. Plays a key role in cell competition via its interaction with l(2)gl. The polypeptide is Protein mahjong (mahj) (Drosophila melanogaster (Fruit fly)).